Here is a 569-residue protein sequence, read N- to C-terminus: Urease subunit alpha (569 aa).

In terms of domain architecture, Urease spans 132–569 (GGIDSHIHFI…LPLAQRYFLF (438 aa)). Ni(2+) contacts are provided by His-137, His-139, and Lys-220. Position 220 is an N6-carboxylysine (Lys-220). A substrate-binding site is contributed by His-222. Positions 249 and 275 each coordinate Ni(2+). The active-site Proton donor is His-323. Position 363 (Asp-363) interacts with Ni(2+).

This sequence belongs to the metallo-dependent hydrolases superfamily. Urease alpha subunit family. As to quaternary structure, heterotrimer of UreA (gamma), UreB (beta) and UreC (alpha) subunits. Three heterotrimers associate to form the active enzyme. Ni cation serves as cofactor. Carboxylation allows a single lysine to coordinate two nickel ions.

The protein localises to the cytoplasm. It carries out the reaction urea + 2 H2O + H(+) = hydrogencarbonate + 2 NH4(+). The protein operates within nitrogen metabolism; urea degradation; CO(2) and NH(3) from urea (urease route): step 1/1. The protein is Urease subunit alpha of Dechloromonas aromatica (strain RCB).